The chain runs to 603 residues: UvrABC system protein C (603 aa).

One can recognise a GIY-YIG domain in the interval 13–92 (SSPGVYLMKD…IKQHHPKYNV (80 aa)). The UVR domain maps to 205–240 (EEVVKDLEKVIQKASDNLEFEQAANYYRTLSLIKQA).

It belongs to the UvrC family. In terms of assembly, interacts with UvrB in an incision complex.

It is found in the cytoplasm. The UvrABC repair system catalyzes the recognition and processing of DNA lesions. UvrC both incises the 5' and 3' sides of the lesion. The N-terminal half is responsible for the 3' incision and the C-terminal half is responsible for the 5' incision. The sequence is that of UvrABC system protein C from Chlamydia pneumoniae (Chlamydophila pneumoniae).